The primary structure comprises 180 residues: 3-hydroxyanthranilate 3,4-dioxygenase (180 aa).

Arginine 46 is a binding site for O2. Fe cation contacts are provided by histidine 50, glutamate 56, and histidine 94. Glutamate 56 is a substrate binding site. Positions 98 and 109 each coordinate substrate. 4 residues coordinate Fe cation: cysteine 124, cysteine 127, cysteine 161, and cysteine 164.

The protein belongs to the 3-HAO family. Homodimer. Fe(2+) serves as cofactor.

The enzyme catalyses 3-hydroxyanthranilate + O2 = (2Z,4Z)-2-amino-3-carboxymuconate 6-semialdehyde. Its pathway is cofactor biosynthesis; NAD(+) biosynthesis; quinolinate from L-kynurenine: step 3/3. Its function is as follows. Catalyzes the oxidative ring opening of 3-hydroxyanthranilate to 2-amino-3-carboxymuconate semialdehyde, which spontaneously cyclizes to quinolinate. In Ruegeria pomeroyi (strain ATCC 700808 / DSM 15171 / DSS-3) (Silicibacter pomeroyi), this protein is 3-hydroxyanthranilate 3,4-dioxygenase.